Consider the following 442-residue polypeptide: MSKTLYQKIYDSHIVYEDKNSESILYIDLHLLHEVTSPQAFDALRNKQRKVRQSRKTFATMDHNVSTTIQNISASGSMAQKQMEQLIKNCQEFNIPLYDINNPNQGIVHVIAPEKGMTLPGMTIVCGDSHTSTHGAFGALAFGIGTSEVEHVLATQTLKQKRFKNMKIEIIGEIPKFVTAKDIILFIIGKLGSSSGTGYVIEFCGDVIKNMSMEERMTICNMAIEMGAKSGLIAPDEITYKYLKNKIYSPSGLSWEKSLDHWKFLKSDKNAYFDKCVTVDISNLAPQITWGTNPDQVISIDEKIPDYNNINSAIKRESSKSACEYMGLQSNTYLTNISIDRVFIGSCTNARIEDLRSASKILKNKKIAKHVKAIVVPGSKLVKRQAEQEGLDRIFIDAGFEWRLPGCSMCLGMNKDRLHFGGRCASXSNRNFEGRQGRGGRT.

[4Fe-4S] cluster is bound by residues cysteine 347, cysteine 407, and cysteine 410.

The protein belongs to the aconitase/IPM isomerase family. LeuC type 1 subfamily. Heterodimer of LeuC and LeuD. Requires [4Fe-4S] cluster as cofactor.

It catalyses the reaction (2R,3S)-3-isopropylmalate = (2S)-2-isopropylmalate. It participates in amino-acid biosynthesis; L-leucine biosynthesis; L-leucine from 3-methyl-2-oxobutanoate: step 2/4. Catalyzes the isomerization between 2-isopropylmalate and 3-isopropylmalate, via the formation of 2-isopropylmaleate. This chain is 3-isopropylmalate dehydratase large subunit, found in Buchnera aphidicola subsp. Uroleucon solidaginis.